The chain runs to 322 residues: Cytochrome c biogenesis protein CcsA (322 aa).

A run of 8 helical transmembrane segments spans residues 17–37 (VVSI…IVGL), 44–64 (GMIA…IYLG), 71–91 (LYES…VPYF), 98–118 (LSAL…SGLL), 143–163 (MVLG…LLVI), 225–245 (VISL…VWAN), 258–273 (ETWA…IYLH), and 286–306 (AIVA…VNLL).

The protein belongs to the CcmF/CycK/Ccl1/NrfE/CcsA family. In terms of assembly, may interact with Ccs1.

It is found in the plastid. It localises to the chloroplast thylakoid membrane. In terms of biological role, required during biogenesis of c-type cytochromes (cytochrome c6 and cytochrome f) at the step of heme attachment. This is Cytochrome c biogenesis protein CcsA from Vitis vinifera (Grape).